The primary structure comprises 429 residues: Adenylosuccinate synthetase (429 aa).

Residues 12 to 18 and 40 to 42 each bind GTP; these read GDEGKGK and GHT. The Proton acceptor role is filled by Asp-13. Mg(2+)-binding residues include Asp-13 and Gly-40. IMP-binding positions include 13-16, 38-41, Thr-129, Arg-143, Gln-223, Thr-238, and Arg-302; these read DEGK and NAGH. Catalysis depends on His-41, which acts as the Proton donor. A substrate-binding site is contributed by 298–304; the sequence is TVTGRKR. GTP contacts are provided by residues Arg-304, 330 to 332, and 412 to 414; these read KLD and STS.

The protein belongs to the adenylosuccinate synthetase family. As to quaternary structure, homodimer. It depends on Mg(2+) as a cofactor.

The protein localises to the cytoplasm. It carries out the reaction IMP + L-aspartate + GTP = N(6)-(1,2-dicarboxyethyl)-AMP + GDP + phosphate + 2 H(+). Its pathway is purine metabolism; AMP biosynthesis via de novo pathway; AMP from IMP: step 1/2. In terms of biological role, plays an important role in the de novo pathway of purine nucleotide biosynthesis. Catalyzes the first committed step in the biosynthesis of AMP from IMP. This chain is Adenylosuccinate synthetase, found in Rhizorhabdus wittichii (strain DSM 6014 / CCUG 31198 / JCM 15750 / NBRC 105917 / EY 4224 / RW1) (Sphingomonas wittichii).